Consider the following 254-residue polypeptide: Imidazole glycerol phosphate synthase subunit HisF (254 aa).

Residues Asp-12 and Asp-131 contribute to the active site.

It belongs to the HisA/HisF family. Heterodimer of HisH and HisF.

The protein localises to the cytoplasm. It catalyses the reaction 5-[(5-phospho-1-deoxy-D-ribulos-1-ylimino)methylamino]-1-(5-phospho-beta-D-ribosyl)imidazole-4-carboxamide + L-glutamine = D-erythro-1-(imidazol-4-yl)glycerol 3-phosphate + 5-amino-1-(5-phospho-beta-D-ribosyl)imidazole-4-carboxamide + L-glutamate + H(+). It participates in amino-acid biosynthesis; L-histidine biosynthesis; L-histidine from 5-phospho-alpha-D-ribose 1-diphosphate: step 5/9. In terms of biological role, IGPS catalyzes the conversion of PRFAR and glutamine to IGP, AICAR and glutamate. The HisF subunit catalyzes the cyclization activity that produces IGP and AICAR from PRFAR using the ammonia provided by the HisH subunit. The protein is Imidazole glycerol phosphate synthase subunit HisF of Frankia casuarinae (strain DSM 45818 / CECT 9043 / HFP020203 / CcI3).